An 84-amino-acid polypeptide reads, in one-letter code: Sulfur carrier protein TusA (84 aa).

Cysteine 21 (cysteine persulfide intermediate) is an active-site residue.

The protein belongs to the sulfur carrier protein TusA family.

The protein localises to the cytoplasm. In terms of biological role, sulfur carrier protein which probably makes part of a sulfur-relay system. The sequence is that of Sulfur carrier protein TusA from Pseudomonas syringae pv. syringae (strain B728a).